A 132-amino-acid chain; its full sequence is Small ribosomal subunit protein uS11 (132 aa).

The protein belongs to the universal ribosomal protein uS11 family. Part of the 30S ribosomal subunit. Interacts with proteins S7 and S18. Binds to IF-3.

Located on the platform of the 30S subunit, it bridges several disparate RNA helices of the 16S rRNA. Forms part of the Shine-Dalgarno cleft in the 70S ribosome. This chain is Small ribosomal subunit protein uS11, found in Legionella pneumophila (strain Corby).